Consider the following 439-residue polypeptide: Homeobox protein ceh-32 (439 aa).

The homeobox DNA-binding region spans 183 to 243 (WDGEQKTHCF…KNRRQRDRAA (61 aa)). Disordered regions lie at residues 253-293 (GVEL…SHIP), 344-365 (EEEN…KKRS), and 379-439 (VSPS…SQSE). Acidic residues-rich tracts occupy residues 264 to 274 (SDSDDDFEDSM) and 344 to 358 (EEEN…EADI). The segment covering 379–392 (VSPSQCSPCSNESL) has biased composition (polar residues). A compositionally biased stretch (basic and acidic residues) spans 398-428 (VKTEEVKKEDDEAAEEDSRSVKSETSEDPKH).

It belongs to the SIX/Sine oculis homeobox family. As to quaternary structure, interacts with gmn-1. As to expression, expressed in the posterior gonad. Expressed in some cells in the head that are probably neurons. Expressed in the dorsal and ventral neuron RMD pair and the inner labial neuron class IL1. Not expressed in BAG neurons.

It is found in the nucleus. Its function is as follows. Transcription factor which binds a motif with the core sequence 5'-GTATCA-3'. Plays a role in head morphogenesis. Involved in embryonic development. Required for cell specification of the RIA interneurons. May cooperate with the transcription factor vab-3 and phosphatase eya-1 to repress transcription factor ets-5 expression in non BAG neuronal cells. In Caenorhabditis elegans, this protein is Homeobox protein ceh-32.